We begin with the raw amino-acid sequence, 194 residues long: Leucyl/phenylalanyl-tRNA--protein transferase (194 aa).

Belongs to the L/F-transferase family.

The protein localises to the cytoplasm. The catalysed reaction is N-terminal L-lysyl-[protein] + L-leucyl-tRNA(Leu) = N-terminal L-leucyl-L-lysyl-[protein] + tRNA(Leu) + H(+). It carries out the reaction N-terminal L-arginyl-[protein] + L-leucyl-tRNA(Leu) = N-terminal L-leucyl-L-arginyl-[protein] + tRNA(Leu) + H(+). It catalyses the reaction L-phenylalanyl-tRNA(Phe) + an N-terminal L-alpha-aminoacyl-[protein] = an N-terminal L-phenylalanyl-L-alpha-aminoacyl-[protein] + tRNA(Phe). Functions in the N-end rule pathway of protein degradation where it conjugates Leu, Phe and, less efficiently, Met from aminoacyl-tRNAs to the N-termini of proteins containing an N-terminal arginine or lysine. In Prosthecochloris aestuarii (strain DSM 271 / SK 413), this protein is Leucyl/phenylalanyl-tRNA--protein transferase.